The sequence spans 279 residues: Phosphatidylglycerol--prolipoprotein diacylglyceryl transferase (279 aa).

3 consecutive transmembrane segments (helical) span residues 22 to 42 (WYGIIIACGILLGYFIAQAAL), 52 to 72 (LIDIIFYSAIVGFIVARIYFV), and 89 to 109 (IWHGGIAIHGGLIGGLISGII). R137 lines the a 1,2-diacyl-sn-glycero-3-phospho-(1'-sn-glycerol) pocket. The next 2 helical transmembrane spans lie at 203 to 223 (LGETFFGYLIWYSVGRFFVEA) and 235 to 255 (IRVAQLVSVVLIMISVIFVIY).

It belongs to the Lgt family.

It is found in the cell membrane. It catalyses the reaction L-cysteinyl-[prolipoprotein] + a 1,2-diacyl-sn-glycero-3-phospho-(1'-sn-glycerol) = an S-1,2-diacyl-sn-glyceryl-L-cysteinyl-[prolipoprotein] + sn-glycerol 1-phosphate + H(+). It participates in protein modification; lipoprotein biosynthesis (diacylglyceryl transfer). Its function is as follows. Catalyzes the transfer of the diacylglyceryl group from phosphatidylglycerol to the sulfhydryl group of the N-terminal cysteine of a prolipoprotein, the first step in the formation of mature lipoproteins. This is Phosphatidylglycerol--prolipoprotein diacylglyceryl transferase from Staphylococcus epidermidis (strain ATCC 35984 / DSM 28319 / BCRC 17069 / CCUG 31568 / BM 3577 / RP62A).